A 432-amino-acid polypeptide reads, in one-letter code: MTELISIKDSSKHVDQEVKMHVWLTDKRSSGKIIFLQLRDGTAFFQGVVRKNDVTDEVFEVAKSLRQESSFYITGTVHEDARSHFGYEIQITDLKVVSNNEGYPIGNKEHGIDFLLDHRHLWLRSKKPFAIMQIRNTMFKATVDFFEKEDFIKFDAPIFMHSAPEGTTQLFHVDYFDHDAYLSQSGQLYGEAGAMAFGKIFTFGPTFRAEESKGRRHMTEFWMMEPEMAWMHQDESLDLQERYLAYMVKQVLDKNEYELKILGRDPEKLRPTTEGNFVRLPYDDAVKMLQDAGRDFKWGDDFGAPDEGYISEQYDRPVFIVNYPTSIKPFYMKKNPDNPKEYLCADVIAPEGYGEIFGGSEREGNYEVLEQQIIDAGLNLEDYQWYLDLRKFGGVPHSGFGMGFERTIAWVCHLDHIREAIPFPRLINRMQP.

This sequence belongs to the class-II aminoacyl-tRNA synthetase family. In terms of assembly, homodimer.

Its subcellular location is the cytoplasm. It catalyses the reaction tRNA(Asn) + L-asparagine + ATP = L-asparaginyl-tRNA(Asn) + AMP + diphosphate + H(+). The polypeptide is Asparagine--tRNA ligase (Lactobacillus helveticus (strain DPC 4571)).